A 197-amino-acid chain; its full sequence is Putative peptidyl-prolyl cis-trans isomerase (197 aa).

Residues Asn14 to Ile195 enclose the PPIase cyclophilin-type domain.

It belongs to the cyclophilin-type PPIase family.

The enzyme catalyses [protein]-peptidylproline (omega=180) = [protein]-peptidylproline (omega=0). In terms of biological role, PPIases accelerate the folding of proteins. It catalyzes the cis-trans isomerization of proline imidic peptide bonds in oligopeptides. This is Putative peptidyl-prolyl cis-trans isomerase from Staphylococcus saprophyticus subsp. saprophyticus (strain ATCC 15305 / DSM 20229 / NCIMB 8711 / NCTC 7292 / S-41).